The sequence spans 376 residues: Glutamate 5-kinase (376 aa).

Residue K15 coordinates ATP. 3 residues coordinate substrate: S56, D143, and N155. An ATP-binding site is contributed by 175–176 (SD). In terms of domain architecture, PUA spans 281-358 (KGTLTIDAGA…PDVMSILGVS (78 aa)).

Belongs to the glutamate 5-kinase family.

It localises to the cytoplasm. It catalyses the reaction L-glutamate + ATP = L-glutamyl 5-phosphate + ADP. It participates in amino-acid biosynthesis; L-proline biosynthesis; L-glutamate 5-semialdehyde from L-glutamate: step 1/2. Its function is as follows. Catalyzes the transfer of a phosphate group to glutamate to form L-glutamate 5-phosphate. This chain is Glutamate 5-kinase, found in Rhodopseudomonas palustris (strain HaA2).